We begin with the raw amino-acid sequence, 498 residues long: Ribose import ATP-binding protein RbsA 1 (498 aa).

ABC transporter domains are found at residues 7-243 (LHIQ…VGRR) and 254-496 (PRGE…IGKS). 39–46 (GENGAGKS) is a binding site for ATP.

Belongs to the ABC transporter superfamily. Ribose importer (TC 3.A.1.2.1) family. In terms of assembly, the complex is composed of an ATP-binding protein (RbsA), two transmembrane proteins (RbsC) and a solute-binding protein (RbsB).

It localises to the cell inner membrane. It catalyses the reaction D-ribose(out) + ATP + H2O = D-ribose(in) + ADP + phosphate + H(+). Its function is as follows. Part of the ABC transporter complex RbsABC involved in ribose import. Responsible for energy coupling to the transport system. The chain is Ribose import ATP-binding protein RbsA 1 from Pasteurella multocida (strain Pm70).